The sequence spans 138 residues: MRALWIMAVLLLGVEGHLMQFENMIKKVTGRSGIWWYGSYGCYCGKGGQGLPQDASDRCCFVHDCCYGKVNGCDPKDDFYVYSSENRDIVCGEDNPCTKEICECDKAAAICFRDNMDTYQNKYWFYPSSNCNEESEPC.

The signal sequence occupies residues 1 to 16 (MRALWIMAVLLLGVEG). Intrachain disulfides connect C42-C131, C44-C60, C59-C111, C65-C138, C66-C104, C73-C97, and C91-C102. Ca(2+) contacts are provided by Y43, G45, and G47. H63 is a catalytic residue. D64 contributes to the Ca(2+) binding site. D105 is an active-site residue.

Ca(2+) serves as cofactor. As to expression, expressed by the venom gland.

It localises to the secreted. It catalyses the reaction a 1,2-diacyl-sn-glycero-3-phosphocholine + H2O = a 1-acyl-sn-glycero-3-phosphocholine + a fatty acid + H(+). In terms of biological role, snake venom phospholipase A2 (PLA2) that shows a moderate inhibition of ADP-induced human platelet aggregation when tested on platelet rich plasma. Exhibits high hydrolytic activities and prefers the anionic micelles (dPPC with deoxycholate) to the zwitterionic micelles (dPPC with Triton X-100). PLA2 catalyzes the calcium-dependent hydrolysis of the 2-acyl groups in 3-sn-phosphoglycerides. This Trimeresurus stejnegeri (Chinese green tree viper) protein is Acidic phospholipase A2 Ts-A6.